Here is a 478-residue protein sequence, read N- to C-terminus: Putative sulfate transporter YbaR (478 aa).

The next 12 membrane-spanning stretches (helical) occupy residues 19-39, 42-62, 65-85, 87-107, 121-141, 143-163, 168-188, 220-240, 259-279, 295-315, 345-365, and 366-386; these read ILAG…FSII, VDPM…SIFG, PGMI…LVAD, GLQY…ILGI, VMIG…LPQF, GASW…YVLP, AVPS…TFHV, IIFP…LLTA, GQGI…CAMI, SAFV…HVVV, APLT…VTDD, and LSKG…AKIS. Residues 389 to 478 form the STAS domain; that stretch reads KIVSHAEDQK…ASKSLMKQMA (90 aa).

This sequence belongs to the SLC26A/SulP transporter (TC 2.A.53) family.

The protein resides in the cell membrane. In Bacillus subtilis (strain 168), this protein is Putative sulfate transporter YbaR (ybaR).